A 102-amino-acid polypeptide reads, in one-letter code: Small ribosomal subunit protein uS10 (102 aa).

It belongs to the universal ribosomal protein uS10 family. Part of the 30S ribosomal subunit.

In terms of biological role, involved in the binding of tRNA to the ribosomes. The protein is Small ribosomal subunit protein uS10 of Opitutus terrae (strain DSM 11246 / JCM 15787 / PB90-1).